A 164-amino-acid polypeptide reads, in one-letter code: uncharacterized protein (164 aa).

This is an uncharacterized protein from Arabidopsis thaliana (Mouse-ear cress).